The chain runs to 71 residues: Cell division protein FtsB (71 aa).

The Cytoplasmic segment spans residues 1–3 (MKI). Residues 4–21 (LKIFLLSLLFWLQYSLWF) form a helical membrane-spanning segment. At 22-71 (GKNGVLDFIKIYRRVTIEKKNNEYLDMRNNQIILEIENFNNHINKDKKKT) the chain is on the extracellular side.

This sequence belongs to the FtsB family.

The protein localises to the cell membrane. In terms of biological role, essential cell division protein. May link together the upstream cell division proteins, which are predominantly cytoplasmic, with the downstream cell division proteins, which are predominantly extracellular. This chain is Cell division protein FtsB, found in Buchnera aphidicola subsp. Acyrthosiphon pisum (strain APS) (Acyrthosiphon pisum symbiotic bacterium).